The following is a 140-amino-acid chain: Large ribosomal subunit protein bL17 (140 aa).

The protein belongs to the bacterial ribosomal protein bL17 family. Part of the 50S ribosomal subunit. Contacts protein L32.

The sequence is that of Large ribosomal subunit protein bL17 from Roseobacter denitrificans (strain ATCC 33942 / OCh 114) (Erythrobacter sp. (strain OCh 114)).